An 85-amino-acid polypeptide reads, in one-letter code: U4-theraphotoxin-Hhn1u (85 aa).

Residues methionine 1–alanine 22 form the signal peptide. Residues glutamate 23–arginine 48 constitute a propeptide that is removed on maturation. Intrachain disulfides connect cysteine 52–cysteine 66, cysteine 56–cysteine 77, and cysteine 71–cysteine 82.

The protein belongs to the neurotoxin 12 (Hwtx-2) family. 02 (Hwtx-2) subfamily. Expressed by the venom gland.

Its subcellular location is the secreted. Its function is as follows. Postsynaptic neurotoxin. This Cyriopagopus hainanus (Chinese bird spider) protein is U4-theraphotoxin-Hhn1u.